The primary structure comprises 379 residues: Beta sliding clamp (379 aa).

It belongs to the beta sliding clamp family. As to quaternary structure, forms a ring-shaped head-to-tail homodimer around DNA which binds and tethers DNA polymerases and other proteins to the DNA. The DNA replisome complex has a single clamp-loading complex (3 tau and 1 each of delta, delta', psi and chi subunits) which binds 3 Pol III cores (1 core on the leading strand and 2 on the lagging strand) each with a beta sliding clamp dimer. Additional proteins in the replisome are other copies of gamma, psi and chi, Ssb, DNA helicase and RNA primase.

The protein resides in the cytoplasm. Functionally, confers DNA tethering and processivity to DNA polymerases and other proteins. Acts as a clamp, forming a ring around DNA (a reaction catalyzed by the clamp-loading complex) which diffuses in an ATP-independent manner freely and bidirectionally along dsDNA. Initially characterized for its ability to contact the catalytic subunit of DNA polymerase III (Pol III), a complex, multichain enzyme responsible for most of the replicative synthesis in bacteria; Pol III exhibits 3'-5' exonuclease proofreading activity. The beta chain is required for initiation of replication as well as for processivity of DNA replication. In Rickettsia felis (strain ATCC VR-1525 / URRWXCal2) (Rickettsia azadi), this protein is Beta sliding clamp (dnaN).